We begin with the raw amino-acid sequence, 297 residues long: tRNA (guanine(37)-N(1))/4-demethylwyosine(37)-methyltransferase Taw22 (297 aa).

S-adenosyl-L-methionine contacts are provided by residues Arg89, Phe106, and 128 to 129 (EL).

The protein belongs to the class I-like SAM-binding methyltransferase superfamily. TRM5/TYW2 family.

Its subcellular location is the cytoplasm. It catalyses the reaction guanosine(37) in tRNA + S-adenosyl-L-methionine = N(1)-methylguanosine(37) in tRNA + S-adenosyl-L-homocysteine + H(+). The enzyme catalyses 4-demethylwyosine(37) in tRNA(Phe) + S-adenosyl-L-methionine = isowyosine(37) in tRNA(Phe) + S-adenosyl-L-homocysteine + H(+). Catalyzes both the N1-methylation of guanosine and the C7-methylation of 4-demethylwyosine (imG-14) at position 37 in tRNA(Phe). This Nanoarchaeum equitans (strain Kin4-M) protein is tRNA (guanine(37)-N(1))/4-demethylwyosine(37)-methyltransferase Taw22.